Consider the following 336-residue polypeptide: Dihydroorotate dehydrogenase (quinone) (336 aa).

FMN is bound by residues 62-66 (AGLDK) and T86. K66 lines the substrate pocket. 111-115 (NRMGF) provides a ligand contact to substrate. FMN contacts are provided by N139 and N172. N172 contributes to the substrate binding site. S175 (nucleophile) is an active-site residue. Residue N177 participates in substrate binding. FMN contacts are provided by K217 and T245. 246 to 247 (NT) lines the substrate pocket. FMN contacts are provided by residues G268, G297, and 318–319 (YS).

It belongs to the dihydroorotate dehydrogenase family. Type 2 subfamily. In terms of assembly, monomer. The cofactor is FMN.

It is found in the cell membrane. It catalyses the reaction (S)-dihydroorotate + a quinone = orotate + a quinol. It participates in pyrimidine metabolism; UMP biosynthesis via de novo pathway; orotate from (S)-dihydroorotate (quinone route): step 1/1. Catalyzes the conversion of dihydroorotate to orotate with quinone as electron acceptor. The polypeptide is Dihydroorotate dehydrogenase (quinone) (Psychromonas ingrahamii (strain DSM 17664 / CCUG 51855 / 37)).